The chain runs to 291 residues: 4-hydroxy-tetrahydrodipicolinate synthase (291 aa).

Threonine 44 contacts pyruvate. Tyrosine 132 serves as the catalytic Proton donor/acceptor. Catalysis depends on lysine 160, which acts as the Schiff-base intermediate with substrate. Residue isoleucine 202 coordinates pyruvate.

Belongs to the DapA family. Homotetramer; dimer of dimers.

The protein localises to the cytoplasm. The enzyme catalyses L-aspartate 4-semialdehyde + pyruvate = (2S,4S)-4-hydroxy-2,3,4,5-tetrahydrodipicolinate + H2O + H(+). Its pathway is amino-acid biosynthesis; L-lysine biosynthesis via DAP pathway; (S)-tetrahydrodipicolinate from L-aspartate: step 3/4. Its function is as follows. Catalyzes the condensation of (S)-aspartate-beta-semialdehyde [(S)-ASA] and pyruvate to 4-hydroxy-tetrahydrodipicolinate (HTPA). This Parvibaculum lavamentivorans (strain DS-1 / DSM 13023 / NCIMB 13966) protein is 4-hydroxy-tetrahydrodipicolinate synthase.